A 147-amino-acid chain; its full sequence is DNA-directed RNA polymerase I subunit rpa14 (147 aa).

Residues 71 to 147 are disordered; it reads VQGPPTEELI…TQGVGEKEQS (77 aa). Residues 74-84 are compositionally biased toward low complexity; it reads PPTEELIIPPE. Over residues 87-111 the composition is skewed to basic and acidic residues; it reads LETKEEESLKHAREENDDLHLDKET. A compositionally biased stretch (basic residues) spans 112 to 124; that stretch reads KKRLKKEKKKAAR. Positions 125-135 are enriched in basic and acidic residues; that stretch reads REKEEARKAKA.

As to quaternary structure, component of the RNA polymerase I (Pol I) complex consisting of 14 subunits. Part of a Pol I subcomplex consisting of the subunits A14 and A43. Interacts with rpa43. In terms of processing, phosphorylated.

The protein resides in the nucleus. It is found in the nucleolus. DNA-dependent RNA polymerase catalyzes the transcription of DNA into RNA using the four ribonucleoside triphosphates as substrates. Component of RNA polymerase I which synthesizes ribosomal RNA precursors. A14 seems to play a role in the stability of Pol I subunit A43 and association of rrn3 to Pol I. The protein is DNA-directed RNA polymerase I subunit rpa14 (ker1) of Schizosaccharomyces pombe (strain 972 / ATCC 24843) (Fission yeast).